Reading from the N-terminus, the 283-residue chain is Pantothenate synthetase (283 aa).

26–33 (MGNLHEGH) lines the ATP pocket. The active-site Proton donor is the H33. Q57 is a (R)-pantoate binding site. Q57 provides a ligand contact to beta-alanine. 148 to 151 (GKKD) provides a ligand contact to ATP. A (R)-pantoate-binding site is contributed by Q154. 185-188 (LSSR) lines the ATP pocket.

The protein belongs to the pantothenate synthetase family. Homodimer.

It is found in the cytoplasm. The catalysed reaction is (R)-pantoate + beta-alanine + ATP = (R)-pantothenate + AMP + diphosphate + H(+). Its pathway is cofactor biosynthesis; (R)-pantothenate biosynthesis; (R)-pantothenate from (R)-pantoate and beta-alanine: step 1/1. Its function is as follows. Catalyzes the condensation of pantoate with beta-alanine in an ATP-dependent reaction via a pantoyl-adenylate intermediate. The chain is Pantothenate synthetase from Polaromonas naphthalenivorans (strain CJ2).